The chain runs to 331 residues: MRRIYAAWTLVAAAGVMDCSPRLEKAAAFTLGPDSQVIVFPFMFQGYNIAVLPTTKYGDLKGNARRRVASFLEHNISHAVWYFVVGGIAYKDDRSERLFSEMMDGYLKKISAGASKVYKGGRKMFSESLETVHEMIFECNKAGDGHVVKYGKSIINRLSDMIENALGEVSAEEKRKYRRFWSRVKERAGFLYSTERLRRVVEAEKIVCNACKEICLELEEEELMGLLAEGSVRKALKAKVDEDEISRGLYLECTVVNTSLLLDAHREHGGDVTRELVKQMLLGKKGEEIDRRYINKVANVVKERQRSEMEKRDREQDPERRRLRARRVGSL.

A compositionally biased stretch (basic and acidic residues) spans 305-320 (QRSEMEKRDREQDPER). The disordered stretch occupies residues 305-331 (QRSEMEKRDREQDPERRRLRARRVGSL). Basic residues predominate over residues 321–331 (RRLRARRVGSL).

This sequence belongs to the UPF0329 family.

The sequence is that of UPF0329 protein ECU01_0080/ECU01_1530/ECU02_1560/ECU04_0090/ECU08_0010/ECU08_2090 from Encephalitozoon cuniculi (strain GB-M1) (Microsporidian parasite).